A 438-amino-acid chain; its full sequence is Protein translocase subunit SecY (438 aa).

The next 10 membrane-spanning stretches (helical) occupy residues 18–38, 76–96, 121–141, 154–174, 177–197, 212–232, 269–289, 315–335, 375–395, and 398–418; these read ILFT…PSPG, VGVM…VVIP, IALA…GGLL, IFSL…VMWM, LITE…GIAA, GVIF…VVFV, VIPV…TQLV, PVYI…YVSV, LPGS…LQIG, and GEVQ…GVGL.

It belongs to the SecY/SEC61-alpha family. Component of the Sec protein translocase complex. Heterotrimer consisting of SecY, SecE and SecG subunits. The heterotrimers can form oligomers, although 1 heterotrimer is thought to be able to translocate proteins. Interacts with the ribosome. Interacts with SecDF, and other proteins may be involved. Interacts with SecA.

It localises to the cell membrane. Functionally, the central subunit of the protein translocation channel SecYEG. Consists of two halves formed by TMs 1-5 and 6-10. These two domains form a lateral gate at the front which open onto the bilayer between TMs 2 and 7, and are clamped together by SecE at the back. The channel is closed by both a pore ring composed of hydrophobic SecY resides and a short helix (helix 2A) on the extracellular side of the membrane which forms a plug. The plug probably moves laterally to allow the channel to open. The ring and the pore may move independently. In Mycobacterium leprae (strain TN), this protein is Protein translocase subunit SecY.